The sequence spans 417 residues: Dibenzothiophene monooxygenase (417 aa).

A helical N-terminus region spans residues 19–125 (DPVAVARGLA…LYTQIAQNNW (107 aa)). FMN-binding positions include Tyr96, 129–134 (NASSEN), 159–163 (KHFCS), Arg282, 369–370 (AR), and His391. The central beta-barrel N-terminus stretch occupies residues 126–234 (WTGNASSENN…VEPDEVLGAP (109 aa)). The tract at residues 131–142 (SSENNSHELDVK) is lid loop. The tract at residues 235–409 (NAFVLAFIQS…DVGKHTLNGQ (175 aa)) is helical C-terminus.

It belongs to the DszC flavin monooxygenase family. In terms of assembly, homotetramer.

It localises to the cytoplasm. It carries out the reaction dibenzothiophene + 2 FMNH2 + 2 O2 = dibenzothiophene 5,5-dioxide + 2 FMN + 2 H2O + 2 H(+). The enzyme catalyses dibenzothiophene + FMNH2 + O2 = dibenzothiophene 5-oxide + FMN + H2O + H(+). The catalysed reaction is dibenzothiophene 5-oxide + FMNH2 + O2 = dibenzothiophene 5,5-dioxide + FMN + H2O + H(+). It functions in the pathway sulfur metabolism; dibenzothiophene degradation. Catalyzes the first step of the '4S' desulfurization pathway that removes covalently bound sulfur from dibenzothiophene (DBT) without breaking carbon-carbon bonds. Sulfur dioxygenase which converts DBT to DBT-sulfone (DBTO2 or DBT 5,5-dioxide) in a stepwise manner. The protein is Dibenzothiophene monooxygenase of Rhodococcus erythropolis (Arthrobacter picolinophilus).